A 239-amino-acid polypeptide reads, in one-letter code: Phosphoribosylaminoimidazole-succinocarboxamide synthase (239 aa).

This sequence belongs to the SAICAR synthetase family.

It carries out the reaction 5-amino-1-(5-phospho-D-ribosyl)imidazole-4-carboxylate + L-aspartate + ATP = (2S)-2-[5-amino-1-(5-phospho-beta-D-ribosyl)imidazole-4-carboxamido]succinate + ADP + phosphate + 2 H(+). It participates in purine metabolism; IMP biosynthesis via de novo pathway; 5-amino-1-(5-phospho-D-ribosyl)imidazole-4-carboxamide from 5-amino-1-(5-phospho-D-ribosyl)imidazole-4-carboxylate: step 1/2. This is Phosphoribosylaminoimidazole-succinocarboxamide synthase from Bacillus thuringiensis subsp. konkukian (strain 97-27).